The primary structure comprises 163 residues: Nucleotide-binding protein KPN78578_03700 (163 aa).

Belongs to the YajQ family.

Functionally, nucleotide-binding protein. This Klebsiella pneumoniae subsp. pneumoniae (strain ATCC 700721 / MGH 78578) protein is Nucleotide-binding protein KPN78578_03700.